Here is a 172-residue protein sequence, read N- to C-terminus: Small ribosomal subunit protein uS5 (172 aa).

Residues 11–74 (LSEVLVDVNR…QAAKKRMMKV (64 aa)) enclose the S5 DRBM domain.

This sequence belongs to the universal ribosomal protein uS5 family. Part of the 30S ribosomal subunit. Contacts proteins S4 and S8.

In terms of biological role, with S4 and S12 plays an important role in translational accuracy. Located at the back of the 30S subunit body where it stabilizes the conformation of the head with respect to the body. This is Small ribosomal subunit protein uS5 from Rickettsia canadensis (strain McKiel).